The following is a 420-amino-acid chain: Gamma-glutamyl phosphate reductase (420 aa).

Belongs to the gamma-glutamyl phosphate reductase family.

It localises to the cytoplasm. It carries out the reaction L-glutamate 5-semialdehyde + phosphate + NADP(+) = L-glutamyl 5-phosphate + NADPH + H(+). It functions in the pathway amino-acid biosynthesis; L-proline biosynthesis; L-glutamate 5-semialdehyde from L-glutamate: step 2/2. In terms of biological role, catalyzes the NADPH-dependent reduction of L-glutamate 5-phosphate into L-glutamate 5-semialdehyde and phosphate. The product spontaneously undergoes cyclization to form 1-pyrroline-5-carboxylate. In Cereibacter sphaeroides (strain ATCC 17023 / DSM 158 / JCM 6121 / CCUG 31486 / LMG 2827 / NBRC 12203 / NCIMB 8253 / ATH 2.4.1.) (Rhodobacter sphaeroides), this protein is Gamma-glutamyl phosphate reductase.